The sequence spans 570 residues: Urease subunit alpha (570 aa).

Residues 131-570 (GGFDSHIHFI…LPMAQRYFLF (440 aa)) form the Urease domain. Positions 136, 138, and 219 each coordinate Ni(2+). Lys219 is modified (N6-carboxylysine). Position 221 (His221) interacts with substrate. Ni(2+) is bound by residues His248 and His274. His322 serves as the catalytic Proton donor. Asp362 contacts Ni(2+).

The protein belongs to the metallo-dependent hydrolases superfamily. Urease alpha subunit family. In terms of assembly, heterotrimer of UreA (gamma), UreB (beta) and UreC (alpha) subunits. Three heterotrimers associate to form the active enzyme. It depends on Ni cation as a cofactor. Post-translationally, carboxylation allows a single lysine to coordinate two nickel ions.

The protein resides in the cytoplasm. It carries out the reaction urea + 2 H2O + H(+) = hydrogencarbonate + 2 NH4(+). The protein operates within nitrogen metabolism; urea degradation; CO(2) and NH(3) from urea (urease route): step 1/1. The polypeptide is Urease subunit alpha (Beijerinckia indica subsp. indica (strain ATCC 9039 / DSM 1715 / NCIMB 8712)).